A 433-amino-acid chain; its full sequence is Glucoside xylosyltransferase 1 (433 aa).

Topologically, residues 1-6 (MRRFAR) are cytoplasmic. Residues 7–29 (VALLFLGCGVCSLLYGVSQLALS) form a helical; Signal-anchor for type II membrane protein membrane-spanning segment. Residues 30–433 (LEQEAGGARQ…DLSVRRSKGS (404 aa)) are Lumenal-facing. Positions 39–64 (QRQARESAAPGGGRQAGSADGGEEGA) are disordered. 5 N-linked (GlcNAc...) asparagine glycosylation sites follow: Asn69, Asn166, Asn271, Asn305, and Asn380.

Belongs to the glycosyltransferase 8 family.

It is found in the membrane. It carries out the reaction 3-O-(beta-D-glucosyl)-L-seryl-[EGF-like domain protein] + UDP-alpha-D-xylose = 3-O-[alpha-D-xylosyl-(1-&gt;3)-beta-D-glucosyl]-L-seryl-[EGF-like domain protein] + UDP + H(+). Functionally, glycosyltransferase which elongates the O-linked glucose attached to EGF-like repeats in the extracellular domain of Notch proteins by catalyzing the addition of xylose. The sequence is that of Glucoside xylosyltransferase 1 (GXYLT1) from Gallus gallus (Chicken).